The primary structure comprises 27 residues: Trypsin inhibitor 1 (27 aa).

In terms of assembly, homodimer. Post-translationally, contains disulfide bonds. In terms of processing, glycosylated.

Its function is as follows. Inhibits trypsin (IC(50)=1.25 uM) but not chymotrypsin or papain. Has antibacterial activity against S.enterica ATCC 10708 (MIC=5 ug/ml) and S.aureus ATCC 25923 (MIC=5 ug/ml) but not against B.subtilis ATCC 6633 or P.aeruginosa ATCC 25619. Has no hemolytic activity against human erythrocytes. Is not toxic to mice. The sequence is that of Trypsin inhibitor 1 from Jatropha curcas (Barbados nut).